A 236-amino-acid polypeptide reads, in one-letter code: Lectin CPL (236 aa).

Mn(2+) is bound by residues Glu-8 and Asp-10. Ca(2+)-binding residues include Asp-10, Tyr-12, Asn-14, and Asp-19. An a carbohydrate-binding site is contributed by Asn-14. Residues Asp-19 and His-24 each coordinate Mn(2+). Residues 99-100 (VY), Asp-207, and Arg-227 contribute to the a carbohydrate site.

The protein belongs to the leguminous lectin family. Homotetramer; dimer of dimers. In terms of processing, concanavalin A-like lectins of the Diocleinae subtribe undergo proteolytic processing referred to as circular permutation. The propeptide is split into an N-terminal and a C-terminal part, the gamma and beta chain, respectively. These are then religated in beta-gamma order to form the mature alpha chain. The beta and gamma chains can often be detected in cell extracts. Residues 1-118 of the mature chain, as displayed here, probably constitute the beta chain in the propeptide, residues 119-236 the gamma chain.

Functionally, D-mannose/D-glucose-binding lectin that also binds derivative alpha-methyl-D-mannppyranoside. Has hemagglutinating activity towards rabbit erythrocytes. The protein is Lectin CPL of Bionia pedicellata (Camptosema pedicellatum).